A 304-amino-acid polypeptide reads, in one-letter code: MKGKEEKEGGARLGTGGGGSPDKSPSAQELKEQGNRLFVGRKYPEAAACYGRAITRNPLVAVYYTNRALCYLKMQQPEQALADCRRALELDGQSVKAHFFLGQCQLEMESYDEAIANLQRAYSLAKEQRLNFGDDIPSALRIAKKKRWNSIEERRIHQESELHSYLTRLIAAERERELEECQRNHEGHEDDGHIRAQQACIEAKHDKYMADMDELFSQVDEKRKKRDIPDYLCGKISFELMREPCITPSGITYDRKDIEEHLQRVGHFDPVTRSPLTQEQLIPNLAMKEVIDAFISENGWVEDY.

Residues 1–10 (MKGKEEKEGG) are compositionally biased toward basic and acidic residues. The interval 1–30 (MKGKEEKEGGARLGTGGGGSPDKSPSAQEL) is disordered. Lys2 is covalently cross-linked (Glycyl lysine isopeptide (Lys-Gly) (interchain with G-Cter in ubiquitin)). Over residues 11–20 (ARLGTGGGGS) the composition is skewed to gly residues. Ser20 carries the phosphoserine modification. Lys23 is covalently cross-linked (Glycyl lysine isopeptide (Lys-Gly) (interchain with G-Cter in ubiquitin)). Residues Ser24 and Ser26 each carry the phosphoserine modification. TPR repeat units follow at residues 27-60 (AQELKEQGNRLFVGRKYPEAAACYGRAITRNPLV), 61-94 (AVYYTNRALCYLKMQQPEQALADCRRALELDGQS), and 96-128 (KAHFFLGQCQLEMESYDEAIANLQRAYSLAKEQ). The segment at 102–201 (GQCQLEMESY…GHIRAQQACI (100 aa)) is required for interaction with MAPK7. Positions 143–197 (AKKKRWNSIEERRIHQESELHSYLTRLIAAERERELEECQRNHEGHEDDGHIRAQ) are required for interaction with and ubiquitination of MYOCD. A required for interaction with FOXO1 region spans residues 144–198 (KKKRWNSIEERRIHQESELHSYLTRLIAAERERELEECQRNHEGHEDDGHIRAQQ). A required for ubiquitination of FOXO1 region spans residues 144–304 (KKKRWNSIEE…ISENGWVEDY (161 aa)). Ser150 carries the phosphoserine modification. Residues Lys222 and Lys256 each participate in a glycyl lysine isopeptide (Lys-Gly) (interchain with G-Cter in ubiquitin) cross-link. The U-box domain maps to 227-301 (DIPDYLCGKI…DAFISENGWV (75 aa)). Residue Ser274 is modified to Phosphoserine.

Homodimer. Interacts with BAG2, and with the E2 ubiquitin conjugating enzymes UBE2D1, UBE2D2 and UBE2D3. Detected in a ternary complex containing STUB1, HSPA1A and HSPBP1. Part of a complex composed of STUB1/CHIP, VCP/p97, CHRNA3, and UBXN2A that modulates the ubiquitination and endoplasmic reticulum-associated degradation (ERAD) of CHRNA3. Within the complex UBXN2A acts as a scaffold protein required for the interaction of CHRNA3 with VCP/p97, this interaction also inhibits CHRNA3 ubiquitination by STUB1/CHIP and subsequently ERAD. Interacts with MKKS. Interacts with DNAAF4. Interacts (via the U-box domain) with the UBE2V2-UBE2N heterodimer; the complex has a specific 'Lys-63'-linked polyubiquitination activity. Interacts (when monoubiquitinated) with ATXN3. Interacts with UBE2W. Interacts with DNAJB6. Interacts with FLCN and HSP90AA1. Interacts with HSP90. Interacts with UBE2N and UBE2V1. Interacts (via TPR repeats) with HSPA8 (via C-terminus). Interacts (via TPR repeats) with HSPA1A (via C-terminus). Interacts with the non-acetylated form of HSPA1A and HSPA1B. Interacts with SMAD3 and HSP90AB1. Interacts with UBE4B. Interacts with PRMT5. Interacts with MYOCD (via C-terminus). Interacts with FOXO1 (when phosphorylated on 'Ser-253'). Interacts with MAPK7/ERK5; the interaction is enhanced in the presence of IGF1 or MAP2K5 and promotes STUB1/CHIP E3 ligase activity. Interacts with and ubiquitinates ESR1; the interaction is promoted in the absence of estradiol (17-beta-estradiol/E2). Interacts with ESR2. Interacts with and ubiquitinates NFATC3; HSPA1A/HSP70 is required as a co-chaperone. In macrophages, interacts with PAQR3; the interaction promotes PPARG poylubiquitination and STUB1-mediated degradation. Component of the chaperone-assisted selective autophagy (CASA) complex consisting of BAG3, HSPA8/HSC70, HSPB8 and STUB1/CHIP. In terms of processing, auto-ubiquitinated; mediated by UBE2D1 and UBE2D2 and enhanced in the presence of MAP2K5. Monoubiquitinated at Lys-2 following cell stress by UBE2W, promoting the interaction with ATXN3. In terms of tissue distribution, expressed in the brain.

It is found in the cytoplasm. The protein localises to the nucleus. The protein resides in the mitochondrion. It carries out the reaction S-ubiquitinyl-[E2 ubiquitin-conjugating enzyme]-L-cysteine + [acceptor protein]-L-lysine = [E2 ubiquitin-conjugating enzyme]-L-cysteine + N(6)-ubiquitinyl-[acceptor protein]-L-lysine.. The protein operates within protein modification; protein ubiquitination. Functionally, E3 ubiquitin-protein ligase which targets misfolded chaperone substrates towards proteasomal degradation. Plays a role in the maintenance of mitochondrial morphology and promotes mitophagic removal of dysfunctional mitochondria; thereby acts as a protector against apoptosis in response to cellular stress. Negatively regulates vascular smooth muscle contraction, via degradation of the transcriptional activator MYOCD and subsequent loss of transcription of genes involved in vascular smooth muscle contraction. Promotes survival and proliferation of cardiac smooth muscle cells via ubiquitination and degradation of FOXO1, resulting in subsequent repression of FOXO1-mediated transcription of pro-apoptotic genes. Ubiquitinates ICER-type isoforms of CREM and targets them for proteasomal degradation, thereby acts as a positive effector of MAPK/ERK-mediated inhibition of apoptosis in cardiomyocytes. Inhibits lipopolysaccharide-induced apoptosis and hypertrophy in cardiomyocytes, via ubiquitination and subsequent proteasomal degradation of NFATC3. Collaborates with ATXN3 in the degradation of misfolded chaperone substrates: ATXN3 restricting the length of ubiquitin chain attached to STUB1/CHIP substrates and preventing further chain extension. Ubiquitinates NOS1 in concert with Hsp70 and Hsp40. Modulates the activity of several chaperone complexes, including Hsp70, Hsc70 and Hsp90. Ubiquitinates CHRNA3 targeting it for endoplasmic reticulum-associated degradation in cortical neurons, as part of the STUB1-VCP-UBXN2A complex. Ubiquitinates and promotes ESR1 proteasomal degradation in response to age-related circulating estradiol (17-beta-estradiol/E2) decline, thereby promotes neuronal apoptosis in response to ischemic reperfusion injury. Mediates transfer of non-canonical short ubiquitin chains to HSPA8 that have no effect on HSPA8 degradation. Mediates polyubiquitination of DNA polymerase beta (POLB) at 'Lys-41', 'Lys-61' and 'Lys-81', thereby playing a role in base-excision repair: catalyzes polyubiquitination by amplifying the HUWE1/ARF-BP1-dependent monoubiquitination and leading to POLB-degradation by the proteasome. Mediates polyubiquitination of CYP3A4. Ubiquitinates EPHA2 and may regulate the receptor stability and activity through proteasomal degradation. Acts as a co-chaperone for HSPA1A and HSPA1B chaperone proteins and promotes ubiquitin-mediated protein degradation. Negatively regulates the suppressive function of regulatory T-cells (Treg) during inflammation by mediating the ubiquitination and degradation of FOXP3 in a HSPA1A/B-dependent manner. Catalyzes monoubiquitination of SIRT6, preventing its degradation by the proteasome. Likely mediates polyubiquitination and down-regulates plasma membrane expression of PD-L1/CD274, an immune inhibitory ligand critical for immune tolerance to self and antitumor immunity. Negatively regulates TGF-beta signaling by modulating the basal level of SMAD3 via ubiquitin-mediated degradation. Plays a role in the degradation of TP53. Mediates ubiquitination of RIPK3 leading to its subsequent proteasome-dependent degradation. May regulate myosin assembly in striated muscles together with UBE4B and VCP/p97 by targeting myosin chaperone UNC45B for proteasomal degradation. Ubiquitinates PPARG in macrophages playing a role in M2 macrophages polarization and angiogenesis. The polypeptide is E3 ubiquitin-protein ligase CHIP (Mus musculus (Mouse)).